Reading from the N-terminus, the 165-residue chain is Ubiquitin-fold modifier-conjugating enzyme 1 (165 aa).

The active-site Glycyl thioester intermediate is the cysteine 117.

The protein belongs to the ubiquitin-conjugating enzyme family. UFC1 subfamily.

In terms of biological role, E2-like enzyme which forms an intermediate with UFM1 via a thioester linkage. The polypeptide is Ubiquitin-fold modifier-conjugating enzyme 1 (Brugia malayi (Filarial nematode worm)).